A 451-amino-acid polypeptide reads, in one-letter code: Probable glycine dehydrogenase (decarboxylating) subunit 1 (451 aa).

The protein belongs to the GcvP family. N-terminal subunit subfamily. In terms of assembly, the glycine cleavage system is composed of four proteins: P, T, L and H. In this organism, the P 'protein' is a heterodimer of two subunits.

The enzyme catalyses N(6)-[(R)-lipoyl]-L-lysyl-[glycine-cleavage complex H protein] + glycine + H(+) = N(6)-[(R)-S(8)-aminomethyldihydrolipoyl]-L-lysyl-[glycine-cleavage complex H protein] + CO2. Its function is as follows. The glycine cleavage system catalyzes the degradation of glycine. The P protein binds the alpha-amino group of glycine through its pyridoxal phosphate cofactor; CO(2) is released and the remaining methylamine moiety is then transferred to the lipoamide cofactor of the H protein. The polypeptide is Probable glycine dehydrogenase (decarboxylating) subunit 1 (Thermococcus kodakarensis (strain ATCC BAA-918 / JCM 12380 / KOD1) (Pyrococcus kodakaraensis (strain KOD1))).